The primary structure comprises 829 residues: Trimethylamine-N-oxide reductase (829 aa).

The segment at residues 1–31 (MNRRDFLKGIASSSFVVLGGSSVLTPLNALA) is a signal peptide (tat-type signal). Serine 180 lines the Mo-bis(molybdopterin guanine dinucleotide) pocket.

Belongs to the prokaryotic molybdopterin-containing oxidoreductase family. Requires Mo-bis(molybdopterin guanine dinucleotide) as cofactor. Post-translationally, predicted to be exported by the Tat system. The position of the signal peptide cleavage has been experimentally proven.

Its subcellular location is the periplasm. It catalyses the reaction trimethylamine + 2 Fe(III)-[cytochrome c] + H2O = trimethylamine N-oxide + 2 Fe(II)-[cytochrome c] + 3 H(+). Its function is as follows. Reduces trimethylamine-N-oxide (TMAO) into trimethylamine; an anaerobic reaction coupled to energy-yielding reactions. This Shewanella massilia protein is Trimethylamine-N-oxide reductase (torA).